We begin with the raw amino-acid sequence, 701 residues long: Serologically defined colon cancer antigen 8 homolog (701 aa).

Acidic residues predominate over residues 1-13; it reads MKPSLESDEEEEL. 2 disordered regions span residues 1–67 and 84–114; these read MKPS…VQQS and ANIQ…GVHN. A compositionally biased stretch (polar residues) spans 45–67; it reads SEPNQQELLSSVQQNPCSPVQQS. Coiled coils occupy residues 119–173, 203–258, and 323–695; these read INNQ…LKEY, HKWR…AVAA, and QQVK…AGKR. The tract at residues 364–387 is disordered; it reads LASEQDKISQAREAARSESKKERE.

It is found in the cytoplasm. It localises to the cytoskeleton. The protein resides in the microtubule organizing center. Its subcellular location is the centrosome. The protein localises to the centriole. It is found in the cilium basal body. It localises to the cell junction. Plays a role in the establishment of cell polarity and epithelial lumen formation. Also plays an essential role in ciliogenesis and subsequent Hedgehog signaling pathway that requires the presence of intact primary cilia for pathway activation. Mechanistically, interacts with and mediates RABEP2 centrosomal localization which is critical for ciliogenesis. This Danio rerio (Zebrafish) protein is Serologically defined colon cancer antigen 8 homolog (Sdccag8).